The following is a 94-amino-acid chain: Large ribosomal subunit protein bL27 (94 aa).

Positions 1–9 (MNLANLQLF) are excised as a propeptide. A disordered region spans residues 11-33 (HKKGGGSTSNGRDSQAKRLGAKA).

Belongs to the bacterial ribosomal protein bL27 family. Post-translationally, the N-terminus is cleaved by ribosomal processing cysteine protease Prp.

This Streptococcus agalactiae serotype V (strain ATCC BAA-611 / 2603 V/R) protein is Large ribosomal subunit protein bL27.